We begin with the raw amino-acid sequence, 67 residues long: SPbeta prophage-derived uncharacterized protein YoqF (67 aa).

The sequence is that of SPbeta prophage-derived uncharacterized protein YoqF (yoqF) from Bacillus subtilis (strain 168).